Here is a 414-residue protein sequence, read N- to C-terminus: MSYYDIIFSKHIDKIKSEGRYREFKALKRQADNFPFAEHANKQIVMWCINDYLGMSKHAKVMHASIDALLKYGVGSGGTRNIGGNNIAILELEKELANLHKKQAALVFTSGFVANDTTLASLAKIMPDIVFFSDELNHASIIAGITSSRAEKYIYRHLDVKHLEELLQSVDINRPKIVVFESAYSMDGFFSPIKDIINLAKKYNALTFIDEVHTVGLYGKQGGGIAELLNCSDQIDIIQGTLAKAYGTIGGYITSNHNLVDAIRLTAPGFIFTTSLPPVISTAATHSIRHLKESNEERIKHQEVVTKLKNSFERFNIPYLKNESHIVPIIIGDPIKTAKASNMLLNEYGIYVQHINFPTVPRGTERLRIIPTPAHTDKMINDLSVALVQIFAELDIELSSAKELNEEVRLNLIA.

Arg22, Ser133, and Lys152 together coordinate substrate. Pyridoxal 5'-phosphate-binding residues include Ser185, His213, and Thr241. Lys244 is a catalytic residue. Lys244 is subject to N6-(pyridoxal phosphate)lysine. Positions 273 and 274 each coordinate pyridoxal 5'-phosphate. Residue Thr359 participates in substrate binding.

This sequence belongs to the class-II pyridoxal-phosphate-dependent aminotransferase family. Homodimer. Pyridoxal 5'-phosphate is required as a cofactor.

The enzyme catalyses succinyl-CoA + glycine + H(+) = 5-aminolevulinate + CO2 + CoA. It functions in the pathway porphyrin-containing compound metabolism; protoporphyrin-IX biosynthesis; 5-aminolevulinate from glycine: step 1/1. This Rickettsia conorii (strain ATCC VR-613 / Malish 7) protein is 5-aminolevulinate synthase (hemA).